Consider the following 316-residue polypeptide: Methionyl-tRNA formyltransferase (316 aa).

Ser112–Pro115 is a binding site for (6S)-5,6,7,8-tetrahydrofolate.

The protein belongs to the Fmt family.

The catalysed reaction is L-methionyl-tRNA(fMet) + (6R)-10-formyltetrahydrofolate = N-formyl-L-methionyl-tRNA(fMet) + (6S)-5,6,7,8-tetrahydrofolate + H(+). Functionally, attaches a formyl group to the free amino group of methionyl-tRNA(fMet). The formyl group appears to play a dual role in the initiator identity of N-formylmethionyl-tRNA by promoting its recognition by IF2 and preventing the misappropriation of this tRNA by the elongation apparatus. The protein is Methionyl-tRNA formyltransferase of Trichlorobacter lovleyi (strain ATCC BAA-1151 / DSM 17278 / SZ) (Geobacter lovleyi).